A 343-amino-acid polypeptide reads, in one-letter code: Hydroxymethylglutaryl-CoA synthase (343 aa).

The (3S)-3-hydroxy-3-methylglutaryl-CoA site is built by Asp-28 and Ala-29. The active-site Proton donor/acceptor is Glu-80. Cys-112 is a binding site for (3S)-3-hydroxy-3-methylglutaryl-CoA. Cys-112 acts as the Acyl-thioester intermediate in catalysis. Position 198 (Arg-198) interacts with CoA. 2 residues coordinate (3S)-3-hydroxy-3-methylglutaryl-CoA: Thr-200 and His-233. The active-site Proton donor/acceptor is His-233. Residue Lys-238 coordinates CoA. The (3S)-3-hydroxy-3-methylglutaryl-CoA site is built by Arg-242, Asn-265, and Ser-295.

The protein belongs to the thiolase-like superfamily. Archaeal HMG-CoA synthase family. In terms of assembly, interacts with acetoacetyl-CoA thiolase that catalyzes the precedent step in the pathway and with a DUF35 protein. The acetoacetyl-CoA thiolase/HMG-CoA synthase complex channels the intermediate via a fused CoA-binding site, which allows for efficient coupling of the endergonic thiolase reaction with the exergonic HMGCS reaction.

It catalyses the reaction acetoacetyl-CoA + acetyl-CoA + H2O = (3S)-3-hydroxy-3-methylglutaryl-CoA + CoA + H(+). It participates in metabolic intermediate biosynthesis; (R)-mevalonate biosynthesis; (R)-mevalonate from acetyl-CoA: step 2/3. Its function is as follows. Catalyzes the condensation of acetyl-CoA with acetoacetyl-CoA to form 3-hydroxy-3-methylglutaryl-CoA (HMG-CoA). Functions in the mevalonate (MVA) pathway leading to isopentenyl diphosphate (IPP), a key precursor for the biosynthesis of isoprenoid compounds that are building blocks of archaeal membrane lipids. The sequence is that of Hydroxymethylglutaryl-CoA synthase from Archaeoglobus fulgidus (strain ATCC 49558 / DSM 4304 / JCM 9628 / NBRC 100126 / VC-16).